Reading from the N-terminus, the 729-residue chain is Fatty acid oxidation complex subunit alpha (729 aa).

An enoyl-CoA hydratase/isomerase region spans residues 1-189 (MLYQSETLQL…KIGLVDAVVD (189 aa)). D296 is a substrate binding site. A 3-hydroxyacyl-CoA dehydrogenase region spans residues 311-729 (AAPKLAAVLG…LLDVSTNQPA (419 aa)). Residues M324, D343, 400–402 (VVE), K407, and S429 contribute to the NAD(+) site. H450 serves as the catalytic For 3-hydroxyacyl-CoA dehydrogenase activity. NAD(+) is bound at residue N453. Positions 500 and 660 each coordinate substrate.

In the N-terminal section; belongs to the enoyl-CoA hydratase/isomerase family. The protein in the C-terminal section; belongs to the 3-hydroxyacyl-CoA dehydrogenase family. Heterotetramer of two alpha chains (FadB) and two beta chains (FadA).

It carries out the reaction a (3S)-3-hydroxyacyl-CoA + NAD(+) = a 3-oxoacyl-CoA + NADH + H(+). The enzyme catalyses a (3S)-3-hydroxyacyl-CoA = a (2E)-enoyl-CoA + H2O. The catalysed reaction is a 4-saturated-(3S)-3-hydroxyacyl-CoA = a (3E)-enoyl-CoA + H2O. It catalyses the reaction (3S)-3-hydroxybutanoyl-CoA = (3R)-3-hydroxybutanoyl-CoA. It carries out the reaction a (3Z)-enoyl-CoA = a 4-saturated (2E)-enoyl-CoA. The enzyme catalyses a (3E)-enoyl-CoA = a 4-saturated (2E)-enoyl-CoA. Its pathway is lipid metabolism; fatty acid beta-oxidation. In terms of biological role, involved in the aerobic and anaerobic degradation of long-chain fatty acids via beta-oxidation cycle. Catalyzes the formation of 3-oxoacyl-CoA from enoyl-CoA via L-3-hydroxyacyl-CoA. It can also use D-3-hydroxyacyl-CoA and cis-3-enoyl-CoA as substrate. In Yersinia pseudotuberculosis serotype IB (strain PB1/+), this protein is Fatty acid oxidation complex subunit alpha.